The primary structure comprises 113 residues: Large ribosomal subunit protein uL24 (113 aa).

Residues 48–70 (HRKRVTNDKGTSSGGLEKRESPM) form a disordered region.

Belongs to the universal ribosomal protein uL24 family. Part of the 50S ribosomal subunit.

Its function is as follows. One of two assembly initiator proteins, it binds directly to the 5'-end of the 23S rRNA, where it nucleates assembly of the 50S subunit. Functionally, one of the proteins that surrounds the polypeptide exit tunnel on the outside of the subunit. This Tropheryma whipplei (strain TW08/27) (Whipple's bacillus) protein is Large ribosomal subunit protein uL24.